Consider the following 125-residue polypeptide: MPREQKQVRELQEGSYVMMDSSPCKINHYSTAKPGKHGSAKARVEGKGVFDEKKRSLSQPVDAKVWVPIIQRKQGQVVSVSGDDAQVMDLDTYETFTMRIPEGEDFTSDDNIEYLEYEGQRKVVG.

Hypusine is present on K36.

This sequence belongs to the eIF-5A family.

The protein localises to the cytoplasm. Functionally, functions by promoting the formation of the first peptide bond. This is Translation initiation factor 5A (eIF5A) from Halorubrum lacusprofundi (strain ATCC 49239 / DSM 5036 / JCM 8891 / ACAM 34).